We begin with the raw amino-acid sequence, 316 residues long: Metal cation efflux system protein CzcD (316 aa).

Residues M1–S16 are Cytoplasmic-facing. Residues L17–M37 traverse the membrane as a helical segment. At T38 to D46 the chain is on the periplasmic side. A helical membrane pass occupies residues A47 to A67. At K68–R81 the chain is on the cytoplasmic side. The helical transmembrane segment at F82–L102 threads the bilayer. Residues Y103–Q114 lie on the Periplasmic side of the membrane. A helical membrane pass occupies residues I115 to M135. At R136–A151 the chain is on the cytoplasmic side. Helical transmembrane passes span Y152 to I172 and F174 to P194. Residues R195–N316 are Cytoplasmic-facing.

It belongs to the cation diffusion facilitator (CDF) transporter (TC 2.A.4) family. SLC30A subfamily.

It localises to the cell inner membrane. Its activity is regulated as follows. Efflux is inhibited by FCCP. Mediates a low-level metal ion resistance, probably by efflux of cations from the cytoplasm into the periplasm. Also mediates resistance to cobalt, cadmium and zinc via regulation of the Czc system. May repress expression of the Czc system by an export of the inducing cations. Binds and transports zinc. Can also bind cobalt, copper and nickel. This is Metal cation efflux system protein CzcD (czcD) from Cupriavidus metallidurans (strain ATCC 43123 / DSM 2839 / NBRC 102507 / CH34) (Ralstonia metallidurans).